Reading from the N-terminus, the 599-residue chain is Proline dehydrogenase 1, mitochondrial (599 aa).

Disordered stretches follow at residues 20–39 (STKP…LRGC) and 152–180 (EEAE…EKQY). The segment covering 23-39 (PQAQEQPPASPEALRGC) has biased composition (low complexity). Basic and acidic residues predominate over residues 153–180 (EAERKEMESCTSEAERDGSGANKREKQY). N6-acetyllysine occurs at positions 356, 367, and 485.

Belongs to the proline oxidase family. The cofactor is FAD. As to expression, expressed in liver, kidney, heart and to a lesser extent in brain, lung and muscle.

The protein resides in the mitochondrion matrix. The catalysed reaction is L-proline + a quinone = (S)-1-pyrroline-5-carboxylate + a quinol + H(+). It participates in amino-acid degradation; L-proline degradation into L-glutamate; L-glutamate from L-proline: step 1/2. Its function is as follows. Converts proline to delta-1-pyrroline-5-carboxylate. In Mus musculus (Mouse), this protein is Proline dehydrogenase 1, mitochondrial (Prodh).